The sequence spans 151 residues: Ribosome maturation factor RimP (151 aa).

Belongs to the RimP family.

The protein localises to the cytoplasm. Functionally, required for maturation of 30S ribosomal subunits. The protein is Ribosome maturation factor RimP of Shewanella sp. (strain MR-4).